The sequence spans 326 residues: D-threonate 4-phosphate dehydrogenase (326 aa).

2 residues coordinate substrate: His138 and Thr139. 3 residues coordinate a divalent metal cation: His168, His212, and His267. Residues Lys275, Asn284, and Arg293 each coordinate substrate.

The protein belongs to the PdxA family. PdxA2 subfamily. As to quaternary structure, homodimer. A divalent metal cation serves as cofactor.

The enzyme catalyses 4-O-phospho-D-threonate + NAD(+) = dihydroxyacetone phosphate + CO2 + NADH. Functionally, catalyzes the NAD-dependent oxidation and subsequent decarboxylation of D-threonate 4-phosphate to produce dihydroxyacetone phosphate (DHAP). Can also use 4-hydroxy-L-threonine 4-phosphate as substrate. In Pectobacterium atrosepticum (strain SCRI 1043 / ATCC BAA-672) (Erwinia carotovora subsp. atroseptica), this protein is D-threonate 4-phosphate dehydrogenase.